The sequence spans 446 residues: Choline monooxygenase, chloroplastic (446 aa).

Residues 1–65 (MAASATTMLL…NTSTNKIITK (65 aa)) constitute a chloroplast transit peptide. One can recognise a Rieske domain in the interval 127 to 234 (WQVAGYSEQV…VAEWGPFILI (108 aa)). Residues C169, H171, C188, and H191 each contribute to the [2Fe-2S] cluster site. Residues H294 and H299 each contribute to the Fe cation site.

This sequence belongs to the choline monooxygenase family. [2Fe-2S] cluster is required as a cofactor. Requires Fe cation as cofactor. It depends on Mg(2+) as a cofactor. Expressed in roots and leaves.

Its subcellular location is the plastid. The protein resides in the chloroplast stroma. It catalyses the reaction choline + 2 reduced [2Fe-2S]-[ferredoxin] + O2 + 2 H(+) = betaine aldehyde hydrate + 2 oxidized [2Fe-2S]-[ferredoxin] + H2O. It participates in amine and polyamine biosynthesis; betaine biosynthesis via choline pathway; betaine aldehyde from choline (monooxygenase route): step 1/1. Its function is as follows. Catalyzes the first step of the osmoprotectant glycine betaine synthesis. This is Choline monooxygenase, chloroplastic (CMO) from Beta vulgaris (Sugar beet).